We begin with the raw amino-acid sequence, 440 residues long: Glycerophosphocholine cholinephosphodiesterase ENPP6 (440 aa).

The N-terminal stretch at 1 to 22 is a signal peptide; it reads MAVKLGTLLLALALGLAQPASA. The substrate site is built by Asp32, Ser71, and Asn92. Asp32 and Ser71 together coordinate Zn(2+). The Nucleophile role is filled by Ser71. Position 71 is a phosphoserine (Ser71). Residues Asn100 and Asn118 are each glycosylated (N-linked (GlcNAc...) asparagine). An intrachain disulfide couples Cys142 to Cys154. Asp193 provides a ligand contact to substrate. The Zn(2+) site is built by Asp193, His197, Asp240, and His241. His241 is a substrate binding site. An N-linked (GlcNAc...) asparagine glycan is attached at Asn341. His354 is a substrate binding site. His354 contacts Zn(2+). An N-linked (GlcNAc...) asparagine glycan is attached at Asn404. The GPI-anchor amidated alanine moiety is linked to residue Ala418. The propeptide at 419–440 is removed in mature form; the sequence is GTTPPVQPSHCALALILLFLLA.

The protein belongs to the nucleotide pyrophosphatase/phosphodiesterase family. Homodimer; disulfide-linked. Homotetramer. It depends on Zn(2+) as a cofactor.

Its subcellular location is the cell membrane. It catalyses the reaction sn-glycerol 3-phosphocholine + H2O = phosphocholine + glycerol + H(+). It carries out the reaction a 1-acyl-sn-glycero-3-phosphocholine + H2O = a 1-acyl-sn-glycerol + phosphocholine + H(+). The enzyme catalyses a 1-O-alkyl-sn-glycero-3-phosphocholine + H2O = a 1-O-alkyl-sn-glycerol + phosphocholine + H(+). The catalysed reaction is 1-dodecanoyl-sn-glycero-3-phosphocholine + H2O = 1-dodecanoyl-sn-glycerol + phosphocholine + H(+). It catalyses the reaction 1-hexadecanoyl-sn-glycero-3-phosphocholine + H2O = 1-hexadecanoyl-sn-glycerol + phosphocholine + H(+). It carries out the reaction 1-(5Z,8Z,11Z,14Z-eicosatetraenoyl)-sn-glycero-3-phosphocholine + H2O = 1-(5Z,8Z,11Z,14Z-eicosatetraenoyl)-sn-glycerol + phosphocholine + H(+). The enzyme catalyses 1-tetradecanoyl-sn-glycero-3-phosphocholine + H2O = 1-tetradecanoyl-sn-glycerol + phosphocholine + H(+). The catalysed reaction is sphing-4-enine-phosphocholine + H2O = sphing-4-enine + phosphocholine + H(+). It catalyses the reaction 1-(9Z-octadecenoyl)-sn-glycero-3-phosphocholine + H2O = 1-(9Z-octadecenoyl)-sn-glycerol + phosphocholine + H(+). It carries out the reaction 1-(9Z,12Z)-octadecadienoyl-sn-glycero-3-phosphocholine + H2O = 1-(9Z,12Z-octadecadienoyl)-sn-glycerol + phosphocholine + H(+). The enzyme catalyses glycero-2-phosphocholine + H2O = phosphocholine + glycerol + H(+). Its activity is regulated as follows. Inhibited by EDTA and EGTA in vitro. Choline-specific glycerophosphodiesterase that hydrolyzes glycerophosphocholine (GPC) and lysophosphatidylcholine (LPC) and contributes to supplying choline to the cells. Has a preference for LPC with short (12:0 and 14:0) or polyunsaturated (18:2 and 20:4) fatty acids. In vitro, hydrolyzes only choline-containing lysophospholipids, such as sphingosylphosphorylcholine (SPC), platelet-activating factor (PAF) and lysoPAF, but not other lysophospholipids. The polypeptide is Glycerophosphocholine cholinephosphodiesterase ENPP6 (Pongo abelii (Sumatran orangutan)).